A 227-amino-acid polypeptide reads, in one-letter code: Cytochrome c oxidase subunit 2 (227 aa).

Residues 1-14 are Mitochondrial intermembrane-facing; the sequence is MAYPFELGFQDATS. Residues 15-45 form a helical membrane-spanning segment; that stretch reads PIMEELLHFHDHTLMIVFLISSLVLYIISLM. The Mitochondrial matrix portion of the chain corresponds to 46–59; the sequence is LTTKLTHTSTMDAQ. The helical transmembrane segment at 60-87 threads the bilayer; sequence EIETIWTILPAIILILIALPSLRILYMM. Over 88-227 the chain is Mitochondrial intermembrane; the sequence is DEINDPSLTV…HFENWSSSML (140 aa). Positions 161, 196, 198, 200, 204, and 207 each coordinate Cu cation. E198 serves as a coordination point for Mg(2+).

The protein belongs to the cytochrome c oxidase subunit 2 family. Component of the cytochrome c oxidase (complex IV, CIV), a multisubunit enzyme composed of 14 subunits. The complex is composed of a catalytic core of 3 subunits MT-CO1, MT-CO2 and MT-CO3, encoded in the mitochondrial DNA, and 11 supernumerary subunits COX4I, COX5A, COX5B, COX6A, COX6B, COX6C, COX7A, COX7B, COX7C, COX8 and NDUFA4, which are encoded in the nuclear genome. The complex exists as a monomer or a dimer and forms supercomplexes (SCs) in the inner mitochondrial membrane with NADH-ubiquinone oxidoreductase (complex I, CI) and ubiquinol-cytochrome c oxidoreductase (cytochrome b-c1 complex, complex III, CIII), resulting in different assemblies (supercomplex SCI(1)III(2)IV(1) and megacomplex MCI(2)III(2)IV(2)). Found in a complex with TMEM177, COA6, COX18, COX20, SCO1 and SCO2. Interacts with TMEM177 in a COX20-dependent manner. Interacts with COX20. Interacts with COX16. Requires Cu cation as cofactor.

It localises to the mitochondrion inner membrane. The catalysed reaction is 4 Fe(II)-[cytochrome c] + O2 + 8 H(+)(in) = 4 Fe(III)-[cytochrome c] + 2 H2O + 4 H(+)(out). Functionally, component of the cytochrome c oxidase, the last enzyme in the mitochondrial electron transport chain which drives oxidative phosphorylation. The respiratory chain contains 3 multisubunit complexes succinate dehydrogenase (complex II, CII), ubiquinol-cytochrome c oxidoreductase (cytochrome b-c1 complex, complex III, CIII) and cytochrome c oxidase (complex IV, CIV), that cooperate to transfer electrons derived from NADH and succinate to molecular oxygen, creating an electrochemical gradient over the inner membrane that drives transmembrane transport and the ATP synthase. Cytochrome c oxidase is the component of the respiratory chain that catalyzes the reduction of oxygen to water. Electrons originating from reduced cytochrome c in the intermembrane space (IMS) are transferred via the dinuclear copper A center (CU(A)) of subunit 2 and heme A of subunit 1 to the active site in subunit 1, a binuclear center (BNC) formed by heme A3 and copper B (CU(B)). The BNC reduces molecular oxygen to 2 water molecules using 4 electrons from cytochrome c in the IMS and 4 protons from the mitochondrial matrix. This chain is Cytochrome c oxidase subunit 2 (MT-CO2), found in Tamias townsendii (Townsend's chipmunk).